The chain runs to 363 residues: S-methylmethionine--homocysteine S-methyltransferase BHMT2 (363 aa).

The region spanning 11–305 is the Hcy-binding domain; the sequence is RGILERLESG…YHIRAIAEEL (295 aa). Zn(2+) is bound by residues cysteine 208, cysteine 290, and cysteine 291. Serine 321 carries the post-translational modification Phosphoserine.

As to quaternary structure, homotetramer. It depends on Zn(2+) as a cofactor.

The catalysed reaction is S-methyl-L-methionine + L-homocysteine = 2 L-methionine + H(+). The protein operates within amino-acid biosynthesis; L-methionine biosynthesis via de novo pathway; L-methionine from L-homocysteine (BhmT route): step 1/1. Functionally, involved in the regulation of homocysteine metabolism. Converts betaine and homocysteine to dimethylglycine and methionine, respectively. This reaction is also required for the irreversible oxidation of choline. The polypeptide is S-methylmethionine--homocysteine S-methyltransferase BHMT2 (BHMT2) (Pongo abelii (Sumatran orangutan)).